A 398-amino-acid chain; its full sequence is Acetate kinase (398 aa).

Asn-9 provides a ligand contact to Mg(2+). An ATP-binding site is contributed by Lys-16. Arg-90 lines the substrate pocket. The active-site Proton donor/acceptor is Asp-147. ATP-binding positions include 207 to 211 (HIGNG), 282 to 284 (DLR), and 330 to 334 (GVGEN). Glu-384 contributes to the Mg(2+) binding site.

It belongs to the acetokinase family. Homodimer. Requires Mg(2+) as cofactor. Mn(2+) is required as a cofactor.

Its subcellular location is the cytoplasm. The catalysed reaction is acetate + ATP = acetyl phosphate + ADP. It participates in metabolic intermediate biosynthesis; acetyl-CoA biosynthesis; acetyl-CoA from acetate: step 1/2. Catalyzes the formation of acetyl phosphate from acetate and ATP. Can also catalyze the reverse reaction. This chain is Acetate kinase, found in Staphylococcus carnosus (strain TM300).